Consider the following 202-residue polypeptide: Cyclin-U4-1 (202 aa).

This sequence belongs to the cyclin family. Cyclin U/P subfamily. Interacts with CDKA-1. In terms of tissue distribution, expressed in roots, stems and flowers. Expressed in the shoot apex, leaf primordia and young leaves.

In Arabidopsis thaliana (Mouse-ear cress), this protein is Cyclin-U4-1 (CYCU4-1).